A 1042-amino-acid polypeptide reads, in one-letter code: Disintegrin and metalloproteinase domain-containing protein unc-71 (1042 aa).

The first 23 residues, 1–23, serve as a signal peptide directing secretion; sequence MICASKITMLGLLVMCTLGGVLG. Topologically, residues 24–746 are extracellular; sequence KVDIRQTTAN…NIGTTLETAT (723 aa). Residues Asn-103 and Asn-155 are each glycosylated (N-linked (GlcNAc...) asparagine). Residues 227 to 431 form the Peptidase M12B domain; sequence KYVEVALIAD…GNIQCLLNKP (205 aa). 4 cysteine pairs are disulfide-bonded: Cys-338/Cys-426, Cys-378/Cys-410, Cys-380/Cys-386, and Cys-496/Cys-516. The Disintegrin domain occupies 437–524; it reads LRECGNGVVD…DCPPDGHLID (88 aa). Asn-538 carries N-linked (GlcNAc...) asparagine glycosylation. The EGF-like domain occupies 662 to 699; sequence SATACPTNNLALLCSGHGHCTTTARCVCFNGWSGVACD. Intrachain disulfides connect Cys-666-Cys-681, Cys-675-Cys-687, and Cys-689-Cys-698. N-linked (GlcNAc...) asparagine glycosylation occurs at Asn-703. Residues 747–767 form a helical membrane-spanning segment; the sequence is LFAILLGFGVFLLLCLVCLML. Over 768 to 1042 the chain is Cytoplasmic; that stretch reads CYRRRSVVEI…KLEMTNSMHN (275 aa). Disordered stretches follow at residues 779-809, 825-850, and 980-1028; these read KPSDEKDEESPDRQIKFGNMPSYREEKRKRK, DERDSTSLRSRDSAGGSQQLVDRRNG, and HDVG…PSLF. Residues 825 to 836 are compositionally biased toward basic and acidic residues; the sequence is DERDSTSLRSRD. The span at 1002–1027 shows a compositional bias: polar residues; that stretch reads DSPTLVNGASSSSTSNNYNFRQSPSL.

The protein resides in the cell membrane. Involved in the migration of sex myoblasts (progenitors of egg-laying muscles), Q neuroblasts and BDU interneurons during development. Involved in axon branching and guidance of neurons including GABAergic type D motor neurons. Promotes sex myoblast migration and positioning independently of gonad attraction cues. May act downstream of mig-13 in order to promote the guidance, migration and positioning of Q neuroblasts and their descendants along the anteroposterior body axis. Required for coordinated movements. This Caenorhabditis elegans protein is Disintegrin and metalloproteinase domain-containing protein unc-71.